We begin with the raw amino-acid sequence, 309 residues long: Coproporphyrin III ferrochelatase (309 aa).

Fe-coproporphyrin III is bound by residues tyrosine 12, threonine 14, arginine 29, 45–46, serine 53, and tyrosine 124; that span reads RY. Fe(2+) is bound by residues histidine 182 and glutamate 263.

It belongs to the ferrochelatase family. Monomer.

The protein resides in the cytoplasm. The enzyme catalyses Fe-coproporphyrin III + 2 H(+) = coproporphyrin III + Fe(2+). Its pathway is porphyrin-containing compound metabolism; protoheme biosynthesis. In terms of biological role, involved in coproporphyrin-dependent heme b biosynthesis. Catalyzes the insertion of ferrous iron into coproporphyrin III to form Fe-coproporphyrin III. The sequence is that of Coproporphyrin III ferrochelatase from Listeria monocytogenes serovar 1/2a (strain ATCC BAA-679 / EGD-e).